Reading from the N-terminus, the 451-residue chain is Adenylyltransferase and sulfurtransferase MOCS3 (451 aa).

Residue Thr-60 is modified to Phosphothreonine. ATP contacts are provided by residues Gly-99, Asp-120, 127–131, Lys-144, and 188–189; these read SNFHR and DN. Zn(2+) is bound by residues Cys-229 and Cys-232. Cys-246 acts as the Glycyl thioester intermediate; for adenylyltransferase activity in catalysis. Cys-304 and Cys-307 together coordinate Zn(2+). Residues 353 to 449 enclose the Rhodanese domain; it reads QQQPHLLIDV…WTHKVDPSFP (97 aa). Residue Cys-408 is the Cysteine persulfide intermediate; for sulfurtransferase activity of the active site.

In the N-terminal section; belongs to the HesA/MoeB/ThiF family. UBA4 subfamily. Requires Zn(2+) as cofactor.

The protein localises to the cytoplasm. The protein resides in the cytosol. The catalysed reaction is [molybdopterin-synthase sulfur-carrier protein]-C-terminal Gly-Gly + ATP + H(+) = [molybdopterin-synthase sulfur-carrier protein]-C-terminal Gly-Gly-AMP + diphosphate. It catalyses the reaction [molybdopterin-synthase sulfur-carrier protein]-C-terminal Gly-Gly-AMP + S-sulfanyl-L-cysteinyl-[cysteine desulfurase] + AH2 = [molybdopterin-synthase sulfur-carrier protein]-C-terminal-Gly-aminoethanethioate + L-cysteinyl-[cysteine desulfurase] + A + AMP + 2 H(+). It participates in tRNA modification; 5-methoxycarbonylmethyl-2-thiouridine-tRNA biosynthesis. It functions in the pathway cofactor biosynthesis; molybdopterin biosynthesis. Functionally, plays a central role in 2-thiolation of mcm(5)S(2)U at tRNA wobble positions of cytosolic tRNA(Lys), tRNA(Glu) and tRNA(Gln). Also essential during biosynthesis of the molybdenum cofactor. Acts by mediating the C-terminal thiocarboxylation of sulfur carriers URM1 and MOCS2A. Its N-terminus first activates URM1 and MOCS2A as acyl-adenylates (-COAMP), then the persulfide sulfur on the catalytic cysteine is transferred to URM1 and MOCS2A to form thiocarboxylation (-COSH) of their C-terminus. The reaction probably involves hydrogen sulfide that is generated from the persulfide intermediate and that acts as a nucleophile towards URM1 and MOCS2A. Subsequently, a transient disulfide bond is formed. Does not use thiosulfate as sulfur donor; NFS1 probably acting as a sulfur donor for thiocarboxylation reactions. This chain is Adenylyltransferase and sulfurtransferase MOCS3, found in Drosophila ananassae (Fruit fly).